The following is a 276-amino-acid chain: Rhomboid protease GlpG (276 aa).

6 consecutive transmembrane segments (helical) span residues 94–114 (GPVTWVMMIACVVVFIAMQIL), 142–162 (ALMHFSLMHILFNLLWWWYLG), 169–189 (LGSGKLIVITLISALLSGYVQ), 192–212 (FSGPWFGGLSGVVYALMGYVW), 229–249 (LIIFALIWIVAGWFDLFGMSM), and 250–270 (ANGAHIAGLAVGLAMAFVDSL). Ser-201 functions as the Nucleophile in the catalytic mechanism. His-254 is an active-site residue.

The protein belongs to the peptidase S54 family.

The protein resides in the cell inner membrane. It catalyses the reaction Cleaves type-1 transmembrane domains using a catalytic dyad composed of serine and histidine that are contributed by different transmembrane domains.. In terms of biological role, rhomboid-type serine protease that catalyzes intramembrane proteolysis. The protein is Rhomboid protease GlpG of Escherichia coli O7:K1 (strain IAI39 / ExPEC).